The chain runs to 318 residues: DNA repair nuclease/redox regulator APEX1 (318 aa).

The tract at residues 1–33 (MPKRGKKGAVAEDGDELRTEPEAKKSKTAAKKN) is necessary for interaction with YBX1, binding to RNA, association together with NPM1 to rRNA, endoribonuclease activity on abasic RNA and localization in the nucleoli. The segment at 1-60 (MPKRGKKGAVAEDGDELRTEPEAKKSKTAAKKNDKEAAGEGPALYEDPPDQKTSPSGKPA) is disordered. Lysine 6 and lysine 7 each carry N6-acetyllysine; by EP300. Residues 8-13 (GAVAED) carry the Nuclear localization signal (NLS) motif. The span at 16–38 (ELRTEPEAKKSKTAAKKNDKEAA) shows a compositional bias: basic and acidic residues. The segment at 23-33 (AKKSKTAAKKN) is necessary for interaction with NPM1 and for efficient rRNA binding. Lysine 27, lysine 31, lysine 32, and lysine 35 each carry N6-acetyllysine. At serine 54 the chain carries Phosphoserine. Residues 64–80 (ICSWNVDGLRAWIKKKG) carry the Nuclear export signal (NES) motif. Cysteine 65 bears the S-nitrosocysteine; alternate mark. Cysteine 65 and cysteine 93 are oxidised to a cystine. Position 70 (aspartate 70) interacts with Mg(2+). Cysteine 93 bears the S-nitrosocysteine; alternate mark. Glutamate 96 contributes to the Mg(2+) binding site. Tyrosine 171 is a catalytic residue. Lysine 197 is modified (N6-acetyllysine). 2 residues coordinate Mg(2+): aspartate 210 and asparagine 212. Aspartate 210 (proton donor/acceptor) is an active-site residue. A Phosphothreonine; by CDK5 modification is found at threonine 233. The segment at 289–318 (HSLLPALCDSKIRSKALGSDHCPITLYLAL) is mitochondrial targeting sequence (MTS). Aspartate 308 provides a ligand contact to Mg(2+). An S-nitrosocysteine modification is found at cysteine 310.

It belongs to the DNA repair enzymes AP/ExoA family. As to quaternary structure, monomer. Homodimer; disulfide-linked. Component of the SET complex, composed of at least APEX1, SET, ANP32A, HMGB2, NME1 and TREX1. Associates with the dimer XRCC5/XRCC6 in a DNA-dependent manner. Interacts with SIRT1; the interaction is increased in the context of genotoxic stress. Interacts with HDAC1, HDAC2 and HDAC3; the interactions are not dependent on the APEX1 acetylation status. Interacts with XRCC1; the interaction is induced by SIRT1 and increased with the APEX1 acetylated form. Interacts with NPM1 (via N-terminal domain); the interaction is RNA-dependent and decreases in hydrogen peroxide-damaged cells. Interacts (via N-terminus) with YBX1 (via C-terminus); the interaction is increased in presence of APEX1 acetylated at Lys-6 and Lys-7. Interacts with HNRNPL; the interaction is DNA-dependent. Interacts (via N-terminus) with KPNA1 and KPNA2. Interacts with TXN; the interaction stimulates the FOS/JUN AP-1 complex DNA-binding activity in a redox-dependent manner. Interacts with GZMA, KRT8, MDM2, POLB, PRDX6, PRPF19, RPLP0, TOMM20 and WDR77. Binds to CDK5. Mg(2+) is required as a cofactor. Mn(2+) serves as cofactor. Post-translationally, phosphorylated. Phosphorylation by kinase PKC or casein kinase CK2 results in enhanced redox activity that stimulates binding of the FOS/JUN AP-1 complex to its cognate binding site. AP-endodeoxyribonuclease activity is not affected by CK2-mediated phosphorylation. Phosphorylation of Thr-233 by CDK5 in response to MPP(+)/MPTP (1-methyl-4-phenylpyridinium) reduces AP-endodeoxyribonuclease activity resulting in accumulation of DNA damage and contributing to neuronal death. Acetylated on Lys-6 and Lys-7. Acetylation is increased by the transcriptional coactivator EP300 acetyltransferase, genotoxic agents like H(2)O(2) and methyl methanesulfonate (MMS). Acetylation increases its binding affinity to the negative calcium response element (nCaRE) DNA promoter. The acetylated form induces a stronger binding of YBX1 to the Y-box sequence in the MDR1 promoter than the unacetylated form. Deacetylated on lysines. Lys-6 and Lys-7 are deacetylated by SIRT1. In terms of processing, cleaved at Lys-31 by granzyme A to create the mitochondrial form; leading in reduction of binding to DNA, AP endodeoxyribonuclease activity, redox activation of transcription factors and to enhanced cell death. Cleaved by granzyme K; leading to intracellular ROS accumulation and enhanced cell death after oxidative stress. Post-translationally, cys-69 and Cys-93 are nitrosylated in response to nitric oxide (NO) and lead to the exposure of the nuclear export signal (NES). Ubiquitinated by MDM2; leading to translocation to the cytoplasm and proteasomal degradation.

Its subcellular location is the nucleus. The protein localises to the nucleolus. It is found in the nucleus speckle. It localises to the endoplasmic reticulum. The protein resides in the cytoplasm. Its subcellular location is the mitochondrion. It carries out the reaction a deoxyribonucleotide-2'-deoxyribose-5'-monophosphate-DNA + H2O = a 5'-end 2'-deoxyribose-5'-monophosphate-DNA + a 3'-end 2'-deoxyribonucleotide-DNA + H(+). The catalysed reaction is Exonucleolytic cleavage in the 3'- to 5'-direction to yield nucleoside 5'-phosphates.. The enzyme catalyses a 3'-end 2'-deoxyribonucleotide-3'-phosphoglycolate-DNA + H2O = 2-phosphoglycolate + a 3'-end 2'-deoxyribonucleotide-DNA + H(+). It catalyses the reaction a 3'-end 2'-deoxyribonucleotide-8-oxoguanine-DNA + H2O = 8-oxo-dGMP + a 3'-end 2'-deoxyribonucleotide-DNA + H(+). With respect to regulation, NPM1 stimulates endodeoxyribonuclease activity on double-stranded DNA with AP sites, but inhibits endoribonuclease activity on single-stranded RNA containing AP sites. In terms of biological role, multifunctional protein that plays a central role in the cellular response to oxidative stress. The two major activities of APEX1 are DNA repair and redox regulation of transcriptional factors. Functions as an apurinic/apyrimidinic (AP) endodeoxyribonuclease in the base excision repair (BER) pathway of DNA lesions induced by oxidative and alkylating agents. Initiates repair of AP sites in DNA by catalyzing hydrolytic incision of the phosphodiester backbone immediately adjacent to the damage, generating a single-strand break with 5'-deoxyribose phosphate and 3'-hydroxyl ends. Also incises at AP sites in the DNA strand of DNA/RNA hybrids, single-stranded DNA regions of R-loop structures, and single-stranded RNA molecules. Operates at switch sites of immunoglobulin (Ig) constant regions where it mediates Ig isotype class switch recombination. Processes AP sites induced by successive action of AICDA and UNG. Generates staggered nicks in opposite DNA strands resulting in the formation of double-strand DNA breaks that are finally resolved via non-homologous end joining repair pathway. Has 3'-5' exodeoxyribonuclease activity on mismatched deoxyribonucleotides at the 3' termini of nicked or gapped DNA molecules during short-patch BER. Possesses DNA 3' phosphodiesterase activity capable of removing lesions (such as phosphoglycolate and 8-oxoguanine) blocking the 3' side of DNA strand breaks. Also acts as an endoribonuclease involved in the control of single-stranded RNA metabolism. Plays a role in regulating MYC mRNA turnover by preferentially cleaving in between UA and CA dinucleotides of the MYC coding region determinant (CRD). In association with NMD1, plays a role in the rRNA quality control process during cell cycle progression. Acts as a loading factor for POLB onto non-incised AP sites in DNA and stimulates the 5'-terminal deoxyribose 5'-phosphate (dRp) excision activity of POLB. Exerts reversible nuclear redox activity to regulate DNA binding affinity and transcriptional activity of transcriptional factors by controlling the redox status of their DNA-binding domain, such as the FOS/JUN AP-1 complex after exposure to IR. Involved in calcium-dependent down-regulation of parathyroid hormone (PTH) expression by binding to negative calcium response elements (nCaREs). Together with HNRNPL or the dimer XRCC5/XRCC6, associates with nCaRE, acting as an activator of transcriptional repression. May also play a role in the epigenetic regulation of gene expression by participating in DNA demethylation. Stimulates the YBX1-mediated MDR1 promoter activity, when acetylated at Lys-6 and Lys-7, leading to drug resistance. Plays a role in protection from granzyme-mediated cellular repair leading to cell death. Binds DNA and RNA. Associates, together with YBX1, on the MDR1 promoter. Together with NPM1, associates with rRNA. The protein is DNA repair nuclease/redox regulator APEX1 (APEX1) of Pan paniscus (Pygmy chimpanzee).